The following is a 398-amino-acid chain: MIIKPRVRGFICVTTHPAGCEANVKQQIDYVEAKGPVVNGPKKVLVIGSSTGYGLAARITAAFGSGADTLGVFFERPGSESKPGTAGWYNSAAFEKFAHEKGLYARSINGDAFSDEVKRLTIETIKRDLGKVDLVVYSLAAPRRTHPKTGEVFSSTLKPIGKSVSFRGLDTDKEVIKDVVLEAASDQEVADTVAVMGGEDWQMWIDALLEADVLADGAKTTAFTYLGEKITHDIYWNGSIGAAKKDLDQKVLGIRDRLAPLGGDARVSVLKAVVTQASSAIPMMPLYLSLLFKVMKEQGTHEGCIEQVDGLYRESLYGAEPRLDEEGRLRADYKELQPEVQSRVEELWDKVTNENLYELTDFAGYKSEFLNLFGFEVAGVDYEQDVDPDVQIANLIQA.

Residues 48–53 (GSSTGY), 74–75 (FE), 111–112 (DA), and 139–140 (LA) contribute to the NAD(+) site. Tyrosine 225 is a binding site for substrate. Residue tyrosine 235 is the Proton donor of the active site. Residues lysine 244 and 273–275 (VVT) each bind NAD(+).

The protein belongs to the TER reductase family. Monomer.

It catalyses the reaction a 2,3-saturated acyl-[ACP] + NAD(+) = a (2E)-enoyl-[ACP] + NADH + H(+). The protein operates within lipid metabolism; fatty acid biosynthesis. Involved in the final reduction of the elongation cycle of fatty acid synthesis (FAS II). Catalyzes the reduction of a carbon-carbon double bond in an enoyl moiety that is covalently linked to an acyl carrier protein (ACP). The sequence is that of Enoyl-[acyl-carrier-protein] reductase [NADH] from Pseudomonas paraeruginosa (strain DSM 24068 / PA7) (Pseudomonas aeruginosa (strain PA7)).